We begin with the raw amino-acid sequence, 513 residues long: NAD(P)H-quinone oxidoreductase subunit 2 (513 aa).

The next 14 membrane-spanning stretches (helical) occupy residues 12 to 32 (TLWPEYIVTITLIVVLLVDLI), 41 to 61 (LPYLALLGLGIATATLLPMWI), 77 to 97 (LSVVFRAFILISAALTVLMSV), 104 to 124 (SLATAEFYVLLLGATLGAMLL), 130 to 150 (MAMIFVALELLSITSYLLSGY), 165 to 185 (LLIGAASSGIFLYGMSLLYGF), 199 to 219 (IVNLGFPALLSLVLVAAGICF), 238 to 258 (PTPVVAFLSVGSKAAGFALAI), 272 to 292 (WQTLFVLLAILSMVLGNVVAI), 300 to 320 (MLAYSSIAQAGYVMIGLAIGT), 328 to 348 (ILYIGTYLFMNLGAFMAVVLF), 372 to 392 (LVLSLCLLSLAGIPPLAGFFG), 394 to 414 (LYLFWAAVQSQAYTLVFFGLV), and 456 to 476 (AGMLITTVATVVLGILFPPLI). Polar residues predominate over residues 494-505 (TATPVSRVSTGA). Residues 494–513 (TATPVSRVSTGAQAPADHGR) form a disordered region.

It belongs to the complex I subunit 2 family. NDH-1 can be composed of about 15 different subunits; different subcomplexes with different compositions have been identified which probably have different functions.

It is found in the cell inner membrane. The enzyme catalyses a plastoquinone + NADH + (n+1) H(+)(in) = a plastoquinol + NAD(+) + n H(+)(out). It catalyses the reaction a plastoquinone + NADPH + (n+1) H(+)(in) = a plastoquinol + NADP(+) + n H(+)(out). In terms of biological role, NDH-1 shuttles electrons from an unknown electron donor, via FMN and iron-sulfur (Fe-S) centers, to quinones in the respiratory and/or the photosynthetic chain. The immediate electron acceptor for the enzyme in this species is believed to be plastoquinone. Couples the redox reaction to proton translocation, and thus conserves the redox energy in a proton gradient. Cyanobacterial NDH-1 also plays a role in inorganic carbon-concentration. The protein is NAD(P)H-quinone oxidoreductase subunit 2 of Gloeobacter violaceus (strain ATCC 29082 / PCC 7421).